We begin with the raw amino-acid sequence, 421 residues long: L-evernosamine nitrososynthase (421 aa).

The protein belongs to the acyl-CoA dehydrogenase family. In terms of assembly, homotetramer. The cofactor is FAD.

It carries out the reaction dTDP-beta-L-evernosamine + 2 NADPH + 2 O2 + H(+) = dTDP-2,3,6-trideoxy-3-C-methyl-4-O-methyl-3-nitroso-beta-L-arabino-hexopyranose + 2 NADP(+) + 3 H2O. The catalysed reaction is dTDP-beta-L-evernosamine + NADPH + O2 = dTDP-N-hydroxy-beta-L-evernosamine + NADP(+) + H2O. It catalyses the reaction dTDP-N-hydroxy-beta-L-evernosamine + NADPH + O2 + H(+) = dTDP-2,3,6-trideoxy-3-C-methyl-4-O-methyl-3-nitroso-beta-L-arabino-hexopyranose + NADP(+) + 2 H2O. It participates in antibiotic biosynthesis. Nitrososynthase involved in the biosynthesis of everninomicin, a broad spectrum orthosomycin antibiotic. Catalyzes the double-oxidation of TDP-L-evernosamine to TDP-L-evernitrosose. The enzyme first oxidizes the substrate to a transient hydroxylamino intermediate, which is then further oxidized to nitroso sugar. The nitroso group is probably spontaneously oxidized giving TDP-L-evernitrose. In vitro, catalyzes the double-oxidation of TDP-L-epi-vancosamine to TDP-L-epi-vancosonitrose. Can also use biosynthetic progenitors of TDP-L-epi-vancosamine, but progenitors solely undergo single-oxidation reactions and terminate in the hydroxylamine oxidation state. The sequence is that of L-evernosamine nitrososynthase from Micromonospora sp. (strain ATCC 39149 / NRRL 15099 / SCC 1413).